A 355-amino-acid polypeptide reads, in one-letter code: Peptide chain release factor 1 (355 aa).

An N5-methylglutamine modification is found at Gln231. A compositionally biased stretch (basic and acidic residues) spans 283-292 (IAKETSERKS). The disordered stretch occupies residues 283–303 (IAKETSERKSQVGTGDRSGRI).

It belongs to the prokaryotic/mitochondrial release factor family. In terms of processing, methylated by PrmC. Methylation increases the termination efficiency of RF1.

It localises to the cytoplasm. In terms of biological role, peptide chain release factor 1 directs the termination of translation in response to the peptide chain termination codons UAG and UAA. The polypeptide is Peptide chain release factor 1 (Campylobacter curvus (strain 525.92)).